Reading from the N-terminus, the 95-residue chain is Selenoprotein K (95 aa).

A helical membrane pass occupies residues 20–42 (LSFLTDMFWGITDFVVMFFQSII). The disordered stretch occupies residues 47–95 (TRRGCQNSSSSTRYDDGRGPPGHPRRMGRINHGSGPSAPPMAGGGGUGR). Position 93 (Sec-93) is a non-standard amino acid, selenocysteine.

This sequence belongs to the selenoprotein K family.

Its subcellular location is the endoplasmic reticulum membrane. The protein localises to the cell membrane. In terms of biological role, required for Ca(2+) flux in immune cells and plays a role in T-cell proliferation and in T-cell and neutrophil migration. Involved in endoplasmic reticulum-associated degradation (ERAD) of soluble glycosylated proteins. Required for cell surface expression of CD36 and involved in macrophage uptake of low-density lipoprotein and in foam cell formation. Required for palmitoylation. This chain is Selenoprotein K (selenok), found in Xenopus laevis (African clawed frog).